The following is a 593-amino-acid chain: Zinc metalloproteinase-disintegrin-like atrase-B (593 aa).

An N-terminal signal peptide occupies residues 1 to 20 (MIQALLVIICLAVFPHQGSS). Positions 21–191 (IILESGNVND…DESIEKTSQL (171 aa)) are excised as a propeptide. The Peptidase M12B domain maps to 205–400 (KYIEFYVIVD…DRPQCILNKP (196 aa)). 2 residues coordinate Ca(2+): Glu-208 and Asp-292. 3 disulfide bridges follow: Cys-316–Cys-395, Cys-356–Cys-379, and Cys-358–Cys-363. Asn-319 carries an N-linked (GlcNAc...) asparagine glycan. His-341 is a binding site for Zn(2+). Residue Glu-342 is part of the active site. Zn(2+)-binding residues include His-345 and His-351. Residues Cys-395, Asn-398, Ile-410, Asn-413, Phe-415, Glu-417, Glu-420, and Asp-423 each contribute to the Ca(2+) site. The 70-residue stretch at 408–477 (PPICGNYFVE…ECPTDSLQRN (70 aa)) folds into the Disintegrin domain. 11 disulfide bridges follow: Cys-422-Cys-435, Cys-424-Cys-430, Cys-434-Cys-440, Cys-449-Cys-469, Cys-456-Cys-488, Cys-481-Cys-493, Cys-500-Cys-550, Cys-515-Cys-558, Cys-528-Cys-538, Cys-545-Cys-581, and Cys-575-Cys-586. The D/ECD-tripeptide motif lies at 455–457 (DCD). Asp-457, Leu-458, Glu-460, and Asp-472 together coordinate Ca(2+). A glycan (N-linked (GlcNAc...) asparagine) is linked at Asn-490.

This sequence belongs to the venom metalloproteinase (M12B) family. P-III subfamily. P-IIIa sub-subfamily. Monomer. Zn(2+) is required as a cofactor. As to expression, expressed by the venom gland.

The protein resides in the secreted. Inhibited by EDTA, EGTA, 1,10-phenanthroline and DTT. Not inhibited by PMSF and SBTI. In terms of biological role, snake venom zinc protease that inhibits the classical and alternative pathways of complement by cleaving factor B, C6, C7, and C8. Also slowly and selectively degrades alpha-chain of fibrinogen (FGA), and shows edema-inducing activity. The sequence is that of Zinc metalloproteinase-disintegrin-like atrase-B from Naja atra (Chinese cobra).